The following is a 240-amino-acid chain: tRNA (guanine-N(1)-)-methyltransferase (240 aa).

S-adenosyl-L-methionine-binding positions include glycine 110 and 129 to 134; that span reads LGDFVL.

The protein belongs to the RNA methyltransferase TrmD family. As to quaternary structure, homodimer.

The protein resides in the cytoplasm. The enzyme catalyses guanosine(37) in tRNA + S-adenosyl-L-methionine = N(1)-methylguanosine(37) in tRNA + S-adenosyl-L-homocysteine + H(+). Specifically methylates guanosine-37 in various tRNAs. The protein is tRNA (guanine-N(1)-)-methyltransferase of Clostridium botulinum (strain 657 / Type Ba4).